Consider the following 194-residue polypeptide: MSNVLVLKSSISGNNSQTNQLADYVIEKLQGNNIVVRDLSQQPLPYFDTAAAIAVRGEPKTTEEKQLLALSDKLIEELKNAQTLIIGAPMYNLNVPTQLKSYFDFIARPRVTFQYTANGSEGLLKGKKAIVLCAFGGLYDEENLVTQYMKSILGFIGITDVQFVYAQGIGFGPEAIEKAQASAKNKINEIVAAL.

FMN contacts are provided by residues S10 and 90–93 (MYNL).

This sequence belongs to the azoreductase type 1 family. In terms of assembly, homodimer. Requires FMN as cofactor.

It carries out the reaction 2 a quinone + NADH + H(+) = 2 a 1,4-benzosemiquinone + NAD(+). It catalyses the reaction N,N-dimethyl-1,4-phenylenediamine + anthranilate + 2 NAD(+) = 2-(4-dimethylaminophenyl)diazenylbenzoate + 2 NADH + 2 H(+). Functionally, quinone reductase that provides resistance to thiol-specific stress caused by electrophilic quinones. Also exhibits azoreductase activity. Catalyzes the reductive cleavage of the azo bond in aromatic azo compounds to the corresponding amines. This is FMN-dependent NADH:quinone oxidoreductase from Haemophilus influenzae (strain 86-028NP).